Reading from the N-terminus, the 824-residue chain is A-adding tRNA nucleotidyltransferase (824 aa).

CBS domains lie at 305–363 (MNTP…DEPI) and 367–423 (VNRD…LEKL). Residue 459 to 462 (GVVR) participates in ATP binding. Residues Asp-472 and Asp-474 each contribute to the Mg(2+) site. Residues 545–546 (RD), Asn-550, 590–599 (DPVRILRALR), Arg-603, and Arg-632 contribute to the ATP site.

This sequence belongs to the tRNA nucleotidyltransferase/poly(A) polymerase family. Requires Mg(2+) as cofactor.

The enzyme catalyses a tRNA with a 3' CC end + ATP = a tRNA with a 3' CCA end + diphosphate. Functionally, tRNA nucleotidyltransferase involved in the synthesis of the tRNA CCA terminus. Adds the terminal adenosine residue to tRNA. Can incorporate CMP into tRNA ending with C74C75 (tRNACC), with very weak efficiency. This Aquifex aeolicus (strain VF5) protein is A-adding tRNA nucleotidyltransferase.